The primary structure comprises 138 residues: Acidic phospholipase A2 Cvv-E6e (138 aa).

The signal sequence occupies residues 1 to 16; the sequence is MRTLWILAVLLLGVEG. 7 disulfide bridges follow: Cys-42/Cys-131, Cys-44/Cys-60, Cys-59/Cys-111, Cys-65/Cys-138, Cys-66/Cys-104, Cys-73/Cys-97, and Cys-91/Cys-102. Positions 43, 45, and 47 each coordinate Ca(2+). His-63 is a catalytic residue. A Ca(2+)-binding site is contributed by Asp-64. The active site involves Asp-105.

It depends on Ca(2+) as a cofactor. Expressed by the venom gland.

The protein resides in the secreted. It catalyses the reaction a 1,2-diacyl-sn-glycero-3-phosphocholine + H2O = a 1-acyl-sn-glycero-3-phosphocholine + a fatty acid + H(+). Its function is as follows. Snake venom phospholipase A2 (PLA2) that significantly inhibits ADP-induced platelet aggregation in platelet-rich plasma of human, rabbit and guinea pig. PLA2 catalyzes the calcium-dependent hydrolysis of the 2-acyl groups in 3-sn-phosphoglycerides. This is Acidic phospholipase A2 Cvv-E6e from Crotalus viridis viridis (Prairie rattlesnake).